A 264-amino-acid polypeptide reads, in one-letter code: Indole-3-glycerol phosphate synthase (264 aa).

Belongs to the TrpC family.

It catalyses the reaction 1-(2-carboxyphenylamino)-1-deoxy-D-ribulose 5-phosphate + H(+) = (1S,2R)-1-C-(indol-3-yl)glycerol 3-phosphate + CO2 + H2O. It functions in the pathway amino-acid biosynthesis; L-tryptophan biosynthesis; L-tryptophan from chorismate: step 4/5. This Carboxydothermus hydrogenoformans (strain ATCC BAA-161 / DSM 6008 / Z-2901) protein is Indole-3-glycerol phosphate synthase.